A 402-amino-acid polypeptide reads, in one-letter code: MESRVLSRATTLSSLPTLNKLHRLPLANASLPSVKSFGSVSDGGNLVWGRQLRPELCSPVLKKGASLLRPCPATAGGNDSAGEEKVAPVGFFSRYPALTTGFFFFTWYFLNVIFNILNKKIYNYFPYPYFVSVIHLAVGVVYCLVSWTVGLPKRAPIDGNLLKLLIPVAVCHALGHVTSNVSFAAVAVSFTHTVKALEPFFNAAASQFILGQSIPITLWLSLAPVVIGVSMASLTELSFNWLGFISAMISNISFTYRSIYSKKAMTDMDSTNIYAYISIIALIVCIPPALIIEGPTLLKTGFNDAIAKVGLVKFVSDLFWVGMFYHLYNQVATNTLERVAPLTHAVGNVLKRVFVIGFSIIIFGNKISTQTGIGTGIAIAGVALYSFIKAQIEEEKRQAKAA.

The N-terminal 72 residues, methionine 1–proline 72, are a transit peptide targeting the chloroplast. Over alanine 73–proline 96 the chain is Chloroplast intermembrane. Residues alanine 97–leucine 117 form a helical membrane-spanning segment. Topologically, residues asparagine 118–tyrosine 129 are lumenal. A helical membrane pass occupies residues phenylalanine 130–glycine 150. The Chloroplast intermembrane segment spans residues leucine 151–glutamine 207. The helical transmembrane segment at phenylalanine 208–glycine 228 threads the bilayer. Residues valine 229–asparagine 272 are Lumenal-facing. A helical membrane pass occupies residues isoleucine 273–isoleucine 292. The Chloroplast intermembrane segment spans residues glutamate 293–glutamine 370. Residues threonine 371–glutamine 391 form a helical membrane-spanning segment. The Lumenal segment spans residues isoleucine 392 to alanine 402.

It belongs to the TPT transporter family. TPT (TC 2.A.7.9) subfamily. In terms of assembly, homodimer.

The protein resides in the plastid. It is found in the chloroplast membrane. Mediates the export of fixed carbons from the chloroplasts into the cytosol in the form of triose phosphates. The polypeptide is Triose phosphate/phosphate translocator, chloroplastic (Pisum sativum (Garden pea)).